A 290-amino-acid chain; its full sequence is Ribosomal protein L11 methyltransferase (290 aa).

Residues threonine 136, glycine 157, aspartate 179, and asparagine 222 each coordinate S-adenosyl-L-methionine.

The protein belongs to the methyltransferase superfamily. PrmA family.

The protein localises to the cytoplasm. The catalysed reaction is L-lysyl-[protein] + 3 S-adenosyl-L-methionine = N(6),N(6),N(6)-trimethyl-L-lysyl-[protein] + 3 S-adenosyl-L-homocysteine + 3 H(+). In terms of biological role, methylates ribosomal protein L11. This is Ribosomal protein L11 methyltransferase from Porphyromonas gingivalis (strain ATCC BAA-308 / W83).